The following is a 368-amino-acid chain: L-arabinitol 4-dehydrogenase (368 aa).

Zn(2+) contacts are provided by cysteine 52, histidine 77, glutamate 78, cysteine 107, cysteine 110, cysteine 113, cysteine 121, and glutamate 162. Residues aspartate 210, arginine 215, and isoleucine 282 each coordinate NAD(+).

This sequence belongs to the zinc-containing alcohol dehydrogenase family. Homotetramer. It depends on Zn(2+) as a cofactor.

It catalyses the reaction L-arabinitol + NAD(+) = L-xylulose + NADH + H(+). Functionally, plays a key role in liamocins biosynthesis by providing the arabinol moity that is linked to 3,5-dihydroxydecanoic acid (provided by the HR-PKS PKS1) via ester bond formation catalyzed by the esterase EST1. The sequence is that of L-arabinitol 4-dehydrogenase from Aureobasidium melanogenum (Aureobasidium pullulans var. melanogenum).